A 331-amino-acid polypeptide reads, in one-letter code: Endo-1,4-beta-xylanase 2 (331 aa).

An N-terminal signal peptide occupies residues 1-17 (MKASSVLLGLAPLAALA). Residues 31 to 329 (QQSIDALMKA…KPAYNSVVQA (299 aa)) enclose the GH10 domain. N-linked (GlcNAc...) asparagine glycosylation occurs at Asn105. The active-site Proton donor is Glu159. Glu266 functions as the Nucleophile in the catalytic mechanism. Cys284 and Cys290 are joined by a disulfide. An N-linked (GlcNAc...) asparagine glycan is attached at Asn301.

This sequence belongs to the glycosyl hydrolase 10 (cellulase F) family.

It localises to the secreted. It carries out the reaction Endohydrolysis of (1-&gt;4)-beta-D-xylosidic linkages in xylans.. The protein operates within glycan degradation; xylan degradation. Its function is as follows. Endo-1,4-beta-xylanase involved in the hydrolysis of xylan, a major structural heterogeneous polysaccharide found in plant biomass representing the second most abundant polysaccharide in the biosphere, after cellulose. Accounts for approximately 70 percent of the endoxylanase activity in the culture filtrate. The sequence is that of Endo-1,4-beta-xylanase 2 (XYL2) from Pyricularia grisea (Crabgrass-specific blast fungus).